Here is a 353-residue protein sequence, read N- to C-terminus: Zinc transporter 5 (353 aa).

Positions 1–27 are cleaved as a signal peptide; that stretch reads MATAAMTKVFVLLFLVAACYLPAHAAA. Residues 28–48 are Extracellular-facing; sequence AECDCATDTAGRDKAQALRLK. Residues 49–69 traverse the membrane as a helical segment; the sequence is VIAIFCILAGSTVGAALPSLG. The Cytoplasmic segment spans residues 70 to 86; that stretch reads GRFPAIQPETDVFLSVK. A helical membrane pass occupies residues 87–107; it reads AFAGGVILATGLVHILPAAFE. Residues 108–121 are Extracellular-facing; sequence ALSSPCLVGGPWKR. The chain crosses the membrane as a helical span at residues 122 to 142; sequence FPFAGMVAMVSAIGTLIVDTV. Residues 143–198 lie on the Cytoplasmic side of the membrane; it reads ATGYFHRTDAKRKAAAVADEPADDLEASDEHSHGHAHGMSVMSVAPAGEEDLVRHR. Residues 199-219 form a helical membrane-spanning segment; it reads VISQVLELGVVVHSLIIGMSL. Topologically, residues 220 to 230 are extracellular; it reads GASDFPSTVRP. A helical transmembrane segment spans residues 231–251; that stretch reads LVPALTFHQFFEGIGLGGCIV. The Cytoplasmic segment spans residues 252–260; it reads QAKFRVRSV. The chain crosses the membrane as a helical span at residues 261–281; sequence VTMALFFSLTTPAGIVVGIGI. The Extracellular segment spans residues 282–292; that stretch reads SSVYDANSPTA. The chain crosses the membrane as a helical span at residues 293 to 313; that stretch reads LVVQGLLEAAAAGILVYMALV. Over 314-332 the chain is Cytoplasmic; sequence DILAEDFMKTKVQRRGRLQ. A helical membrane pass occupies residues 333–353; sequence LAMNVALLLGAGLMSMIAIWA.

This sequence belongs to the ZIP transporter (TC 2.A.5) family.

Its subcellular location is the cell membrane. Its function is as follows. Zinc transporter that mediates zinc uptake from the rhizosphere and may be responsible for the translocation of zinc within the plant. In Oryza sativa subsp. japonica (Rice), this protein is Zinc transporter 5 (ZIP5).